Reading from the N-terminus, the 372-residue chain is N-methyl-L-tryptophan oxidase (372 aa).

4–34 (DLIIIGSGSVGAAAGYYATRAGLNVLMTDAH) serves as a coordination point for FAD. Cys308 is modified (S-8alpha-FAD cysteine).

Belongs to the MSOX/MTOX family. MTOX subfamily. As to quaternary structure, monomer. The cofactor is FAD.

The enzyme catalyses N(alpha)-methyl-L-tryptophan + O2 + H2O = L-tryptophan + formaldehyde + H2O2. Its function is as follows. Catalyzes the oxidative demethylation of N-methyl-L-tryptophan. The protein is N-methyl-L-tryptophan oxidase of Escherichia coli O1:K1 / APEC.